The chain runs to 298 residues: Multifunctional dioxygenase ausE (298 aa).

Substrate-binding residues include Arg-72 and Gln-127. Residues His-130 and Asp-132 each coordinate Fe cation. Thr-167 lines the substrate pocket. His-214 contributes to the Fe cation binding site. Arg-226 is a substrate binding site.

Belongs to the PhyH family. Homodimer. Requires Fe cation as cofactor.

The enzyme catalyses preaustinoid A1 + 2-oxoglutarate + O2 = preaustinoid A2 + succinate + CO2 + H2O. It catalyses the reaction preaustinoid A2 + 2-oxoglutarate + O2 = preaustinoid A3 + succinate + CO2 + H2O. The catalysed reaction is berkeleyone A + 2-oxoglutarate + O2 = preaustinoid A + succinate + CO2 + H2O. It functions in the pathway secondary metabolite biosynthesis; terpenoid biosynthesis. Functionally, multifunctional dioxygenase; part of the gene cluster B that mediates the biosynthesis of austinol and dehydroaustinol, two fungal meroterpenoids. The first step of the pathway is the synthesis of 3,5-dimethylorsellinic acid by the polyketide synthase ausA. 3,5-dimethylorsellinic acid is then prenylated by the polyprenyl transferase ausN. Further epoxidation by the FAD-dependent monooxygenase ausM and cyclization by the probable terpene cyclase ausL lead to the formation of protoaustinoid A. Protoaustinoid A is then oxidized to spiro-lactone preaustinoid A3 by the combined action of the FAD-binding monooxygenases ausB and ausC, and the dioxygenase ausE. Acid-catalyzed keto-rearrangement and ring contraction of the tetraketide portion of preaustinoid A3 by ausJ lead to the formation of preaustinoid A4. The aldo-keto reductase ausK, with the help of ausH, is involved in the next step by transforming preaustinoid A4 into isoaustinone which is in turn hydroxylated by the P450 monooxygenase ausI to form austinolide. Finally, the cytochrome P450 monooxygenase ausG modifies austinolide to austinol. Austinol can be further modified to dehydroaustinol which forms a diffusible complex with diorcinol that initiates conidiation. Due to genetic rearrangements of the clusters and the subsequent loss of some enzymes, the end products of the Emericella nidulans austinoid biosynthesis clusters are austinol and dehydroaustinol, even if additional enzymes, such as the O-acetyltransferase ausQ and the cytochrome P450 monooxygenase ausR are still functional. This chain is Multifunctional dioxygenase ausE, found in Emericella nidulans (strain FGSC A4 / ATCC 38163 / CBS 112.46 / NRRL 194 / M139) (Aspergillus nidulans).